Consider the following 572-residue polypeptide: Glutathione hydrolase 5 proenzyme (572 aa).

Residues 1–6 (MAWGHR) lie on the Cytoplasmic side of the membrane. A helical; Signal-anchor for type II membrane protein transmembrane segment spans residues 7–29 (TTVCLVLLGVSLGLAIIVLAVVL). Residues 30–572 (PHHQASCRPD…LRKAGKASGY (543 aa)) are Extracellular-facing. Asn98 is a glycosylation site (N-linked (GlcNAc...) asparagine). Arg110 contacts L-glutamate. Residues Asn185, Asn194, Asn204, Asn277, Asn303, Asn347, and Asn377 are each glycosylated (N-linked (GlcNAc...) asparagine). Catalysis depends on Thr388, which acts as the Nucleophile. L-glutamate-binding positions include Thr406, Glu427, and 453-454 (SS).

The protein belongs to the gamma-glutamyltransferase family. In terms of assembly, heterodimer composed of the light and heavy chains. The active site is located in the light chain. Cleaved by autocatalysis into a large and a small subunit. In terms of processing, glycosylated. Widely expressed, but at low level, except in the airway epithelial cells. Detected in brain, heart, kidney, liver, lung, spleen, testis and trachea.

It is found in the membrane. It carries out the reaction glutathione + H2O = L-cysteinylglycine + L-glutamate. The catalysed reaction is an S-substituted glutathione + H2O = an S-substituted L-cysteinylglycine + L-glutamate. It catalyses the reaction leukotriene C4 + H2O = leukotriene D4 + L-glutamate. The enzyme catalyses S-[(2E,6E,10E)-geranylgeranyl]-L-glutathione + H2O = S-[(2E,6E,10E)-geranylgeranyl]-L-cysteinylglycine + L-glutamate. It carries out the reaction an N-terminal (5-L-glutamyl)-[peptide] + an alpha-amino acid = 5-L-glutamyl amino acid + an N-terminal L-alpha-aminoacyl-[peptide]. Its pathway is lipid metabolism; leukotriene D4 biosynthesis. It functions in the pathway sulfur metabolism; glutathione metabolism. With respect to regulation, inhibited by serine-borate. Functionally, cleaves the gamma-glutamyl bond of extracellular glutathione tripeptide (gamma-Glu-Cys-Gly) and certain glutathione conjugates. Hydrolyzes glutathione releasing L-Glu and Cys-Gly dipeptide which is further metabolized to maintain extracellular cysteine levels but also to provide cysteine necessary for intracellular glutathione synthesis. Among glutathione-S-conjugates metabolizes leukotriene C4 (LTC4) and S-geranylgeranyl-glutathione (GGG), but is inactive toward gamma-glutamyl leucine. Converts extracellular LTC4 to LTD4 during acute inflammatory response. Acts as a negative regulator of GGG bioactivity. GGT5 (via GGG catabolism) and ABCC1 (via extracellular transport) establish GGG gradients within lymphoid tissues to position P2RY8-positive lymphocytes at germinal centers in lymphoid follicles and restrict their chemotactic transmigration from blood vessels to bone marrow parenchyma. The transpeptidation reaction, i.e. the transfer of gamma-glutamyl moiety to an acceptor molecule to yield a new gamma-glutamyl compound requires high concentration of dipeptide acceptor and is considered nonphysiological. The polypeptide is Glutathione hydrolase 5 proenzyme (Ggt5) (Rattus norvegicus (Rat)).